Here is a 129-residue protein sequence, read N- to C-terminus: Regulator of ribonuclease activity B (129 aa).

The protein belongs to the RraB family. Interacts with the C-terminal region of Rne.

It is found in the cytoplasm. Globally modulates RNA abundance by binding to RNase E (Rne) and regulating its endonucleolytic activity. Can modulate Rne action in a substrate-dependent manner by altering the composition of the degradosome. The polypeptide is Regulator of ribonuclease activity B (Shewanella denitrificans (strain OS217 / ATCC BAA-1090 / DSM 15013)).